The following is a 225-amino-acid chain: Leucyl/phenylalanyl-tRNA--protein transferase (225 aa).

Belongs to the L/F-transferase family.

It is found in the cytoplasm. It carries out the reaction N-terminal L-lysyl-[protein] + L-leucyl-tRNA(Leu) = N-terminal L-leucyl-L-lysyl-[protein] + tRNA(Leu) + H(+). It catalyses the reaction N-terminal L-arginyl-[protein] + L-leucyl-tRNA(Leu) = N-terminal L-leucyl-L-arginyl-[protein] + tRNA(Leu) + H(+). The enzyme catalyses L-phenylalanyl-tRNA(Phe) + an N-terminal L-alpha-aminoacyl-[protein] = an N-terminal L-phenylalanyl-L-alpha-aminoacyl-[protein] + tRNA(Phe). In terms of biological role, functions in the N-end rule pathway of protein degradation where it conjugates Leu, Phe and, less efficiently, Met from aminoacyl-tRNAs to the N-termini of proteins containing an N-terminal arginine or lysine. The polypeptide is Leucyl/phenylalanyl-tRNA--protein transferase (Nitrobacter winogradskyi (strain ATCC 25391 / DSM 10237 / CIP 104748 / NCIMB 11846 / Nb-255)).